Here is a 360-residue protein sequence, read N- to C-terminus: Histidinol-phosphate aminotransferase (360 aa).

Lys-224 carries the N6-(pyridoxal phosphate)lysine modification.

It belongs to the class-II pyridoxal-phosphate-dependent aminotransferase family. Histidinol-phosphate aminotransferase subfamily. It depends on pyridoxal 5'-phosphate as a cofactor.

The catalysed reaction is L-histidinol phosphate + 2-oxoglutarate = 3-(imidazol-4-yl)-2-oxopropyl phosphate + L-glutamate. It participates in amino-acid biosynthesis; L-histidine biosynthesis; L-histidine from 5-phospho-alpha-D-ribose 1-diphosphate: step 7/9. This is Histidinol-phosphate aminotransferase from Methanococcoides burtonii (strain DSM 6242 / NBRC 107633 / OCM 468 / ACE-M).